Consider the following 72-residue polypeptide: U-actitoxin-Aeq5b (72 aa).

A signal peptide spans M1–S20. 4 cysteine pairs are disulfide-bonded: C33–C71, C37–C66, C44–C59, and C50–C56.

Belongs to the Acrorhagin I family. Expressed by acrorhagi.

It is found in the secreted. The protein localises to the nematocyst. Toxin that is lethal to crab. It interacts with divalent metal ions (zinc and nickel) suggesting it may function as a metal ion chelator to regulate metal ion levels or as a metal ion transporter, or that its function is modulated by metal ions. Is not active against any of the voltage-gated potassium and sodium channels tested. In addition, it does not show activity in bacterial and fungal growth inhibitory assays as well as in hemolytic assays. The sequence is that of U-actitoxin-Aeq5b from Actinia equina (Beadlet anemone).